The primary structure comprises 135 residues: ATP synthase epsilon chain, chloroplastic (135 aa).

The protein belongs to the ATPase epsilon chain family. As to quaternary structure, F-type ATPases have 2 components, CF(1) - the catalytic core - and CF(0) - the membrane proton channel. CF(1) has five subunits: alpha(3), beta(3), gamma(1), delta(1), epsilon(1). CF(0) has three main subunits: a, b and c.

The protein resides in the plastid. The protein localises to the chloroplast thylakoid membrane. Its function is as follows. Produces ATP from ADP in the presence of a proton gradient across the membrane. In Marchantia polymorpha (Common liverwort), this protein is ATP synthase epsilon chain, chloroplastic.